We begin with the raw amino-acid sequence, 180 residues long: Putative protein 33K (180 aa).

Residues 31–108 are disordered; the sequence is LEEAYKQLEK…AKAPRNYGTP (78 aa). Residues 33–43 are compositionally biased toward basic and acidic residues; it reads EAYKQLEKELG. Over residues 60 to 78 the composition is skewed to acidic residues; that stretch reads PLSEGELEEISEEEEEEGE.

The protein is Putative protein 33K of Pantherophis guttatus (Corn snake).